A 279-amino-acid polypeptide reads, in one-letter code: Release factor glutamine methyltransferase (279 aa).

The S-adenosyl-L-methionine site is built by Glu-141 and Asn-187. Substrate is bound at residue 187-190 (NPPY).

It belongs to the protein N5-glutamine methyltransferase family. PrmC subfamily.

It catalyses the reaction L-glutaminyl-[peptide chain release factor] + S-adenosyl-L-methionine = N(5)-methyl-L-glutaminyl-[peptide chain release factor] + S-adenosyl-L-homocysteine + H(+). Functionally, methylates the class 1 translation termination release factors RF1/PrfA and RF2/PrfB on the glutamine residue of the universally conserved GGQ motif. The protein is Release factor glutamine methyltransferase of Corynebacterium glutamicum (strain ATCC 13032 / DSM 20300 / JCM 1318 / BCRC 11384 / CCUG 27702 / LMG 3730 / NBRC 12168 / NCIMB 10025 / NRRL B-2784 / 534).